The chain runs to 828 residues: Translation initiation factor IF-2 (828 aa).

Disordered regions lie at residues 48–76 and 112–148; these read SYSG…SEEF and ASQE…ESTL. Over residues 49–58 the composition is skewed to polar residues; that stretch reads YSGSTTTLSL. The segment covering 65–74 has biased composition (low complexity); sequence LETGSSSGSE. Over residues 116-126 the composition is skewed to acidic residues; sequence DPIEVEQEESS. The span at 127-144 shows a compositional bias: basic and acidic residues; the sequence is DTNKVKEEPKIEEVKDIE. The 171-residue stretch at 326 to 496 folds into the tr-type G domain; it reads SRAPVVTVMG…LLIAEMQNLK (171 aa). A G1 region spans residues 335-342; that stretch reads GHVDHGKT. 335 to 342 lines the GTP pocket; it reads GHVDHGKT. The segment at 360-364 is G2; it reads GITQH. The G3 stretch occupies residues 382–385; it reads DTPG. Residues 382 to 386 and 436 to 439 contribute to the GTP site; these read DTPGH and NKID. Positions 436-439 are G4; sequence NKID. Positions 472-474 are G5; sequence SAL.

Belongs to the TRAFAC class translation factor GTPase superfamily. Classic translation factor GTPase family. IF-2 subfamily.

The protein resides in the cytoplasm. Functionally, one of the essential components for the initiation of protein synthesis. Protects formylmethionyl-tRNA from spontaneous hydrolysis and promotes its binding to the 30S ribosomal subunits. Also involved in the hydrolysis of GTP during the formation of the 70S ribosomal complex. The sequence is that of Translation initiation factor IF-2 from Rickettsia bellii (strain OSU 85-389).